The sequence spans 94 residues: MTKSELIERLVQKCHAVAAKDVENAVKEILDQMSFALESGKRIEVRGFGSFSLHYRQPRLGRNPKTGEQVKLDAKSVPHFKAGKELRERVDIYA.

It belongs to the bacterial histone-like protein family. Heterodimer of an alpha and a beta chain.

Functionally, this protein is one of the two subunits of integration host factor, a specific DNA-binding protein that functions in genetic recombination as well as in transcriptional and translational control. The chain is Integration host factor subunit beta (ihfB) from Pasteurella multocida (strain Pm70).